The primary structure comprises 352 residues: Phenylalanine--tRNA ligase alpha subunit (352 aa).

Glu258 contacts Mg(2+).

Belongs to the class-II aminoacyl-tRNA synthetase family. Phe-tRNA synthetase alpha subunit type 1 subfamily. As to quaternary structure, tetramer of two alpha and two beta subunits. Mg(2+) is required as a cofactor.

It localises to the cytoplasm. The catalysed reaction is tRNA(Phe) + L-phenylalanine + ATP = L-phenylalanyl-tRNA(Phe) + AMP + diphosphate + H(+). The sequence is that of Phenylalanine--tRNA ligase alpha subunit from Staphylococcus aureus (strain NCTC 8325 / PS 47).